We begin with the raw amino-acid sequence, 240 residues long: Uridylate kinase (240 aa).

12 to 15 is a binding site for ATP; it reads KLSG. Residues 20–25 are involved in allosteric activation by GTP; the sequence is GEQGNG. Glycine 54 is a binding site for UMP. ATP contacts are provided by glycine 55 and arginine 59. UMP contacts are provided by residues aspartate 74 and 135 to 142; that span reads TGNPYFST. The ATP site is built by asparagine 163, tyrosine 169, and aspartate 172.

The protein belongs to the UMP kinase family. Homohexamer. Interacts with BrxC.

The protein localises to the cytoplasm. It carries out the reaction UMP + ATP = UDP + ADP. It functions in the pathway pyrimidine metabolism; CTP biosynthesis via de novo pathway; UDP from UMP (UMPK route): step 1/1. Its activity is regulated as follows. Allosterically activated by GTP. Can also be activated by dGTP and 3'-anthraniloyl-2'-deoxyguanosine-5'-triphosphate (Ant-dGTP). Inhibited by UTP, 5-bromo-UTP and 5-iodo-UTP. Its function is as follows. Catalyzes the reversible phosphorylation of UMP to UDP, with ATP or dATP as the most efficient phosphate donors. Is also able to phosphorylate 5-fluoro-UMP and 6-aza-UMP. The protein is Uridylate kinase (pyrH) of Bacillus subtilis (strain 168).